The sequence spans 545 residues: Ubiquitin carboxyl-terminal hydrolase 17-like protein C (545 aa).

One can recognise a USP domain in the interval 51–348 (CGLQNTGNSC…NAYVLFYVQQ (298 aa)). The active-site Nucleophile is Cys60. The active-site Proton acceptor is the His307. Disordered regions lie at residues 368–442 (DPEY…QKLG) and 489–539 (WGRD…KQGQ). A compositionally biased stretch (basic residues) spans 374–385 (KKSRRKKHKKKS). 2 stretches are compositionally biased toward basic and acidic residues: residues 393 to 404 (EPCKNREKRATK) and 489 to 505 (WGRD…HNAD). Residues 508-519 (LTSQDPVNTGQL) are compositionally biased toward polar residues. A compositionally biased stretch (basic residues) spans 524 to 537 (GRRRSKKGKNKNKQ).

It belongs to the peptidase C19 family. USP17 subfamily. Expressed in T cells.

Its subcellular location is the nucleus. The protein localises to the endoplasmic reticulum. The enzyme catalyses Thiol-dependent hydrolysis of ester, thioester, amide, peptide and isopeptide bonds formed by the C-terminal Gly of ubiquitin (a 76-residue protein attached to proteins as an intracellular targeting signal).. Deubiquitinating enzyme that removes conjugated ubiquitin from specific proteins to regulate different cellular processes. Important for preimplantation stage embryonic development. This chain is Ubiquitin carboxyl-terminal hydrolase 17-like protein C, found in Mus musculus (Mouse).